The chain runs to 77 residues: Acyl carrier protein (77 aa).

In terms of domain architecture, Carrier spans 2–77 (STIEERVKKV…EAIDYVVAHQ (76 aa)). O-(pantetheine 4'-phosphoryl)serine is present on Ser-37.

It belongs to the acyl carrier protein (ACP) family. Post-translationally, 4'-phosphopantetheine is transferred from CoA to a specific serine of apo-ACP by AcpS. This modification is essential for activity because fatty acids are bound in thioester linkage to the sulfhydryl of the prosthetic group.

It localises to the cytoplasm. Its pathway is lipid metabolism; fatty acid biosynthesis. In terms of biological role, carrier of the growing fatty acid chain in fatty acid biosynthesis. In Chromohalobacter salexigens (strain ATCC BAA-138 / DSM 3043 / CIP 106854 / NCIMB 13768 / 1H11), this protein is Acyl carrier protein.